A 92-amino-acid chain; its full sequence is Small ribosomal subunit protein uS19 (92 aa).

Belongs to the universal ribosomal protein uS19 family.

Functionally, protein S19 forms a complex with S13 that binds strongly to the 16S ribosomal RNA. The protein is Small ribosomal subunit protein uS19 of Rippkaea orientalis (strain PCC 8801 / RF-1) (Cyanothece sp. (strain PCC 8801)).